A 205-amino-acid chain; its full sequence is NAD(P)H dehydrogenase (quinone) (205 aa).

Residues 3–194 (VLVVYYSMYG…AAARYQGKHV (192 aa)) enclose the Flavodoxin-like domain. FMN-binding positions include 9–14 (SMYGHI) and 82–84 (TRF). Tyr-11 serves as a coordination point for NAD(+). Trp-102 contacts substrate. His-138 lines the FMN pocket.

Belongs to the WrbA family. The cofactor is FMN.

It catalyses the reaction a quinone + NADH + H(+) = a quinol + NAD(+). The catalysed reaction is a quinone + NADPH + H(+) = a quinol + NADP(+). In Geotalea daltonii (strain DSM 22248 / JCM 15807 / FRC-32) (Geobacter daltonii), this protein is NAD(P)H dehydrogenase (quinone).